Consider the following 605-residue polypeptide: Alpha-1,3-galactosidase B (605 aa).

An N-terminal signal peptide occupies residues 1-19 (MKRIIFNFCFVWLAVSAFA). PbH1 repeat units lie at residues 428–450 (CPEVYFADNVIRNNRARGTLFST), 451–473 (PLKTVVERNLFDHTSGTAILLCG), and 484–538 (CRNV…VIED).

This sequence belongs to the glycosyl hydrolase 110 family. B subfamily.

The catalysed reaction is Hydrolysis of terminal, non-reducing branched (1-&gt;3)-alpha-D-galactosidic residues, producing free D-galactose.. It carries out the reaction Hydrolysis of terminal, non-reducing linear (1-&gt;3)-alpha-D-galactosidic residues, producing free D-galactose.. It catalyses the reaction Hydrolysis of terminal, non-reducing alpha-D-galactose residues in alpha-D-galactosides, including galactose oligosaccharides, galactomannans and galactolipids.. Alpha-galactosidase. Removes both branched alpha-1,3-linked galactose residues of blood group B antigens and linear alpha-1,3-linked galactose structures. In Phocaeicola vulgatus (strain ATCC 8482 / DSM 1447 / JCM 5826 / CCUG 4940 / NBRC 14291 / NCTC 11154) (Bacteroides vulgatus), this protein is Alpha-1,3-galactosidase B (glaB2).